We begin with the raw amino-acid sequence, 318 residues long: tRNA pseudouridine synthase B (318 aa).

The Nucleophile role is filled by aspartate 47.

The protein belongs to the pseudouridine synthase TruB family. Type 1 subfamily.

It carries out the reaction uridine(55) in tRNA = pseudouridine(55) in tRNA. Its function is as follows. Responsible for synthesis of pseudouridine from uracil-55 in the psi GC loop of transfer RNAs. The protein is tRNA pseudouridine synthase B of Colwellia psychrerythraea (strain 34H / ATCC BAA-681) (Vibrio psychroerythus).